The chain runs to 372 residues: Protein RecA (372 aa).

77-84 (GPESSGKT) is a binding site for ATP.

It belongs to the RecA family.

Its subcellular location is the cytoplasm. Its function is as follows. Can catalyze the hydrolysis of ATP in the presence of single-stranded DNA, the ATP-dependent uptake of single-stranded DNA by duplex DNA, and the ATP-dependent hybridization of homologous single-stranded DNAs. It interacts with LexA causing its activation and leading to its autocatalytic cleavage. This chain is Protein RecA, found in Corynebacterium diphtheriae (strain ATCC 700971 / NCTC 13129 / Biotype gravis).